The sequence spans 1212 residues: DNA-directed RNA polymerase subunit beta' (1212 aa).

Zn(2+)-binding residues include Cys-60, Cys-62, Cys-75, and Cys-78. 3 residues coordinate Mg(2+): Asp-450, Asp-452, and Asp-454. The Zn(2+) site is built by Cys-819, Cys-893, Cys-900, and Cys-903.

It belongs to the RNA polymerase beta' chain family. As to quaternary structure, the RNAP catalytic core consists of 2 alpha, 1 beta, 1 beta' and 1 omega subunit. When a sigma factor is associated with the core the holoenzyme is formed, which can initiate transcription. Mg(2+) is required as a cofactor. Zn(2+) serves as cofactor.

The catalysed reaction is RNA(n) + a ribonucleoside 5'-triphosphate = RNA(n+1) + diphosphate. Its function is as follows. DNA-dependent RNA polymerase catalyzes the transcription of DNA into RNA using the four ribonucleoside triphosphates as substrates. The polypeptide is DNA-directed RNA polymerase subunit beta' (Streptococcus thermophilus (strain ATCC BAA-491 / LMD-9)).